A 180-amino-acid polypeptide reads, in one-letter code: Flavodoxin 2 (180 aa).

Residues 4–173 (IGLFFGSNTG…RVAAWLAQIA (170 aa)) enclose the Flavodoxin-like domain. FMN is bound by residues 10-15 (SNTGKT), threonine 57, glycine 61, aspartate 99, 106-108 (NYL), and aspartate 155.

The cofactor is FMN.

Functionally, flavodoxins are low-potential electron donors to a number of redox enzymes. NifF is the electron donor to nitrogenase, and is thus implicated in nitrogen fixation. Does not function as an electron donor to nitrite reductase. In Azotobacter vinelandii, this protein is Flavodoxin 2.